The chain runs to 305 residues: Glycine--tRNA ligase alpha subunit (305 aa).

The protein belongs to the class-II aminoacyl-tRNA synthetase family. Tetramer of two alpha and two beta subunits.

It is found in the cytoplasm. The catalysed reaction is tRNA(Gly) + glycine + ATP = glycyl-tRNA(Gly) + AMP + diphosphate. This is Glycine--tRNA ligase alpha subunit from Vibrio parahaemolyticus serotype O3:K6 (strain RIMD 2210633).